The sequence spans 214 residues: N-(5'-phosphoribosyl)anthranilate isomerase (214 aa).

This sequence belongs to the TrpF family.

The catalysed reaction is N-(5-phospho-beta-D-ribosyl)anthranilate = 1-(2-carboxyphenylamino)-1-deoxy-D-ribulose 5-phosphate. Its pathway is amino-acid biosynthesis; L-tryptophan biosynthesis; L-tryptophan from chorismate: step 3/5. The polypeptide is N-(5'-phosphoribosyl)anthranilate isomerase (Halorubrum lacusprofundi (strain ATCC 49239 / DSM 5036 / JCM 8891 / ACAM 34)).